A 96-amino-acid polypeptide reads, in one-letter code: uncharacterized protein (96 aa).

The signal sequence occupies residues 1–15; that stretch reads MRLFILLVALFVICA.

This is an uncharacterized protein from Caenorhabditis elegans.